The chain runs to 449 residues: MNYKNKILVSESGLTQKHLIHGDEELFQHELRTIXARNWLFLTHDSLIPSPGDYVTAKMGIDEVIVSRQSDGSIRAFLNVCRHRGKTLVNAEAGNAKGFVCSYHGWGFGSNGELQSVPFEKELYGESLNKKCLGLKEVARVESFHGFIYGCFDQEAPSLMDYLGDAAWYLEPIFKHSGGLELVGPPGKVVIKANWKAPAENFVGDAYHVGWTHASSLRTGESIFSSLAGNAVLPPEGAGLQMTSKYGSGMGVLWDGYSGVHSADLVPELMAFGGAKQERLNKEIGDVPARIYRSHLNCTVFPNNSVLTCSGVFKVWNPIDANTTEVWTYAIVEKDMPEDLKRRLADAVQRTFGPAGFWESDDNDNMETASQNGKKYQSRDSDLISNLGFGKDVYGDAVYPGVVGKSAIGETSYRGFYRAYQAHVSSSNWAEFEDASSTWHTELTKTTDR.

Residues 39 to 137 (WLFLTHDSLI…LNKKCLGLKE (99 aa)) form the Rieske domain. [2Fe-2S] cluster is bound by residues Cys81, His83, Cys101, and His104. Positions 208, 213, and 362 each coordinate Fe cation.

It belongs to the bacterial ring-hydroxylating dioxygenase alpha subunit family. As to quaternary structure, the naphthalene dioxygenase (NDO) multicomponent enzyme system is composed of an electron transfer component and a dioxygenase component (iron sulfur protein (ISP)). The electron transfer component is composed of a ferredoxin reductase (NdoR) and a ferredoxin (NdoA), and the dioxygenase component is formed of a heterohexamer (trimer of heterodimers) of three large alpha subunits (NdoB) and three small beta subunits (NdoC). [2Fe-2S] cluster is required as a cofactor. The cofactor is Fe(2+).

The catalysed reaction is naphthalene + NADH + O2 + H(+) = (1R,2S)-1,2-dihydronaphthalene-1,2-diol + NAD(+). The protein operates within aromatic compound metabolism; naphthalene degradation. Component of the naphthalene dioxygenase (NDO) multicomponent enzyme system which catalyzes the incorporation of both atoms of molecular oxygen into naphthalene to form cis-(1R,2S)-dihydroxy-1,2-dihydronaphthalene. The alpha subunit has a catalytic role in the holoenzyme. This Pseudomonas fluorescens protein is Naphthalene 1,2-dioxygenase system, large oxygenase component.